The following is a 123-amino-acid chain: Small ribosomal subunit protein uS13 (123 aa).

Positions 89–123 are disordered; it reads GRRHRSGLPVRGQRTRTNARTRKGKRKAVAKKKAK. The span at 101–123 shows a compositional bias: basic residues; the sequence is QRTRTNARTRKGKRKAVAKKKAK.

It belongs to the universal ribosomal protein uS13 family. In terms of assembly, part of the 30S ribosomal subunit. Forms a loose heterodimer with protein S19. Forms two bridges to the 50S subunit in the 70S ribosome.

Its function is as follows. Located at the top of the head of the 30S subunit, it contacts several helices of the 16S rRNA. In the 70S ribosome it contacts the 23S rRNA (bridge B1a) and protein L5 of the 50S subunit (bridge B1b), connecting the 2 subunits; these bridges are implicated in subunit movement. Contacts the tRNAs in the A and P-sites. The chain is Small ribosomal subunit protein uS13 from Cutibacterium acnes (strain DSM 16379 / KPA171202) (Propionibacterium acnes).